The chain runs to 616 residues: Sialic acid TRAP transporter permease protein SiaT (616 aa).

A TRAP transporter small permease region spans residues 1-190 (MKYINKLEEW…RISNYIKLGS (190 aa)). 17 helical membrane-spanning segments follow: residues 9–29 (EWLGGTLFIAIFGILIAQILS), 36–56 (PLIWSEELAKLLFVYVGMLGI), 83–103 (TNTFVQLLVFVCIFLFIHFGI), 117–137 (GGISEKWIFAALPVIAILMMF), 153–173 (YLPATFFIISAVILFAILFFA), 195–215 (IALLVWLIIMFIGVPVGWSLF), 244–264 (FPLLAVPFYILTGILMNTGGI), 288–308 (IGASLLFSGMSGSALADAGGL), 332–352 (ASCIIGPLVPPSIAMIIYGVI), 357–377 (IAKLFIAGFIPGVLITLALMA), 407–427 (FWAILTPLLIIGGIFSGLFSP), 431–451 (AIVAAAYSIIIGKFVYKELTL), 459–479 (IEAMAITGVVALMIMTVTFFG), 505–525 (VLVMINALLLFLGMFIDALAL), 527–547 (FLVLPMLIPIAMQFNIDLIFF), 552–572 (TLNMMIGILTPPMGMALFVVA), and 587–607 (LPFLIPVFVTLVLITIFPQII). The interval 191-616 (SSVYIALLVW…ITFVPNLLIP (426 aa)) is TRAP transporter large permease.

This sequence in the N-terminal section; belongs to the TRAP transporter small permease family. It in the C-terminal section; belongs to the TRAP transporter large permease family. In terms of assembly, the complex comprises the extracytoplasmic solute receptor protein SiaP, and the fused transmembrane protein SiaT.

The protein localises to the cell inner membrane. Its function is as follows. Part of the tripartite ATP-independent periplasmic (TRAP) transport system SiaPT involved in the uptake of sialic acid. This chain is Sialic acid TRAP transporter permease protein SiaT (siaT), found in Haemophilus influenzae (strain 86-028NP).